Reading from the N-terminus, the 555-residue chain is Glutamine--tRNA ligase (555 aa).

Residues 34–44 carry the 'HIGH' region motif; it reads PEPNGYLHIGH. ATP-binding positions include 35–37 and 41–47; these read EPN and HIGHAKS. Residues Asp-67 and Tyr-212 each contribute to the L-glutamine site. Residues Thr-231, 261–262, and 269–271 each bind ATP; these read RL and MSK. Positions 268 to 272 match the 'KMSKS' region motif; that stretch reads IMSKR.

This sequence belongs to the class-I aminoacyl-tRNA synthetase family. As to quaternary structure, monomer.

It is found in the cytoplasm. It catalyses the reaction tRNA(Gln) + L-glutamine + ATP = L-glutaminyl-tRNA(Gln) + AMP + diphosphate. This chain is Glutamine--tRNA ligase, found in Erwinia tasmaniensis (strain DSM 17950 / CFBP 7177 / CIP 109463 / NCPPB 4357 / Et1/99).